The primary structure comprises 232 residues: MPLQAPSIGEKFPEIEVMTTHGKIKLPDHFRGKWFVLFSHPADFTPVCTTEFVAFAKRYEDFKKLNTELIGLSVDSTFSHIKWAEWIKEKLGVEIPFPIIADPTGEVAKKLGLLHAQSSTATVRAVFVVDDKGVVRAILYYPQEVGRNIDEILRLIESLQISDKYGRAIPANWPNNELIGDNLIVPPAATVQEAEERLKKFKCFDWWFCYEDKATAEEKELARKFLKRVANC.

The Thioredoxin domain maps to 6–161; the sequence is PSIGEKFPEI…ILRLIESLQI (156 aa). C48 functions as the Cysteine sulfenic acid (-SOH) intermediate in the catalytic mechanism. Residue R124 coordinates substrate. C203 and C209 are joined by a disulfide.

This sequence belongs to the peroxiredoxin family. Prx6 subfamily. In terms of assembly, homodecamer. Pentamer of dimers that assemble into a ring structure.

It is found in the cytoplasm. The catalysed reaction is a hydroperoxide + [thioredoxin]-dithiol = an alcohol + [thioredoxin]-disulfide + H2O. Thiol-specific peroxidase that catalyzes the reduction of hydrogen peroxide and organic hydroperoxides to water and alcohols, respectively. Plays a role in cell protection against oxidative stress by detoxifying peroxides. This Hyperthermus butylicus (strain DSM 5456 / JCM 9403 / PLM1-5) protein is Peroxiredoxin.